The following is a 27-amino-acid chain: Caerulein precursor fragment R2 (27 aa).

As to expression, expressed by the skin glands.

It is found in the secreted. In terms of biological role, antimicrobial peptide. The protein is Caerulein precursor fragment R2 of Xenopus ruwenzoriensis (Uganda clawed frog).